The sequence spans 109 residues: ATPase inhibitor, mitochondrial (109 aa).

The N-terminal 25 residues, Met1–Phe25, are a transit peptide targeting the mitochondrion. Residues Gly26–Gln52 are disordered. An N-terminal inhibitory region region spans residues Gly26–Gln52. Residues Ala69 to Asp109 are a coiled coil. The segment at His74 to Glu106 is antiparallel alpha-helical coiled coil region. N6-succinyllysine is present on Lys103.

It belongs to the ATPase inhibitor family. In terms of assembly, homodimer; represents the active form and is present at a pH value below 6.5. Homotetramer; represents the inactive form and is present at a pH value above 7.0.

The protein localises to the mitochondrion. In terms of biological role, endogenous F(1)F(o)-ATPase inhibitor limiting ATP depletion when the mitochondrial membrane potential falls below a threshold and the F(1)F(o)-ATP synthase starts hydrolyzing ATP to pump protons out of the mitochondrial matrix. Required to avoid the consumption of cellular ATP when the F(1)F(o)-ATP synthase enzyme acts as an ATP hydrolase. Indirectly acts as a regulator of heme synthesis in erythroid tissues: regulates heme synthesis by modulating the mitochondrial pH and redox potential, allowing FECH to efficiently catalyze the incorporation of iron into protoporphyrin IX to produce heme. This chain is ATPase inhibitor, mitochondrial, found in Bos taurus (Bovine).